Reading from the N-terminus, the 446-residue chain is 3-phosphoshikimate 1-carboxyvinyltransferase (446 aa).

3-phosphoshikimate is bound by residues Lys35, Ser36, and Arg40. A phosphoenolpyruvate-binding site is contributed by Lys35. Phosphoenolpyruvate contacts are provided by Gly108 and Arg137. 3-phosphoshikimate contacts are provided by Ser182, Gln184, Asp332, and Lys359. Residue Gln184 coordinates phosphoenolpyruvate. Residue Asp332 is the Proton acceptor of the active site. Positions 363 and 405 each coordinate phosphoenolpyruvate.

This sequence belongs to the EPSP synthase family. As to quaternary structure, monomer.

The protein localises to the cytoplasm. It catalyses the reaction 3-phosphoshikimate + phosphoenolpyruvate = 5-O-(1-carboxyvinyl)-3-phosphoshikimate + phosphate. It functions in the pathway metabolic intermediate biosynthesis; chorismate biosynthesis; chorismate from D-erythrose 4-phosphate and phosphoenolpyruvate: step 6/7. Functionally, catalyzes the transfer of the enolpyruvyl moiety of phosphoenolpyruvate (PEP) to the 5-hydroxyl of shikimate-3-phosphate (S3P) to produce enolpyruvyl shikimate-3-phosphate and inorganic phosphate. In Acaryochloris marina (strain MBIC 11017), this protein is 3-phosphoshikimate 1-carboxyvinyltransferase.